The sequence spans 483 residues: Pentatricopeptide repeat-containing protein At5g18950 (483 aa).

9 PPR repeats span residues 144–178 (EPTL…GISS), 179–213 (SVVT…EFDS), 218–246 (CLIR…GLDP), 247–281 (GQYV…NHFP), 282–316 (SMYI…GYAP), 317–351 (DRVV…GMRP), 352–386 (NEFA…GYGG), 387–421 (TMLS…GVTP), and 422–456 (NAIT…GLKP).

This sequence belongs to the PPR family. P subfamily.

In Arabidopsis thaliana (Mouse-ear cress), this protein is Pentatricopeptide repeat-containing protein At5g18950.